The primary structure comprises 559 residues: Mercuric reductase (559 aa).

In terms of domain architecture, HMA spans 1 to 64; the sequence is MYLNITGMTC…AVAGLGYKAT (64 aa). A metal cation-binding residues include C10 and C13. FAD contacts are provided by A108, G128, and T133. A disulfide bond links C134 and C139. Residues K143, A209, D401, and V409 each coordinate FAD. Residues C556 and C557 each contribute to the Hg(2+) site.

Belongs to the class-I pyridine nucleotide-disulfide oxidoreductase family. In terms of assembly, homodimer. Requires FAD as cofactor.

It carries out the reaction Hg + NADP(+) + H(+) = Hg(2+) + NADPH. Functionally, resistance to Hg(2+) in bacteria appears to be governed by a specialized system which includes mercuric reductase. MerA protein is responsible for volatilizing mercury as Hg(0). The polypeptide is Mercuric reductase (merA) (Alcaligenes sp).